The chain runs to 422 residues: 5-hydroxytryptamine receptor 1A (422 aa).

Over 1–38 (MDVFSFGQGNNTTASQEPFGTGGNVTSISDVTFSYQVI) the chain is Extracellular. N-linked (GlcNAc...) asparagine glycans are attached at residues asparagine 10, asparagine 11, and asparagine 24. The chain crosses the membrane as a helical span at residues 39-59 (TSLLLGTLIFCAVLGNACVVA). The Cytoplasmic segment spans residues 60–73 (AIALERSLQNVANY). A helical transmembrane segment spans residues 74-98 (LIGSLAVTDLMVSVLVLPMAALYQV). The Extracellular segment spans residues 99-107 (LNKWTLGQV). The helical transmembrane segment at 108-132 (TCDLFIALDVLCCTSSILHLCAIAL) threads the bilayer. A disulfide bridge connects residues cysteine 109 and cysteine 187. The serotonin site is built by aspartate 116 and cysteine 120. The DRY motif; important for ligand-induced conformation changes motif lies at 133-135 (DRY). Topologically, residues 133–152 (DRYWAITDPIDYVNKRTPRR) are cytoplasmic. The chain crosses the membrane as a helical span at residues 153–174 (AAALISLTWLIGFLISIPPMLG). Over 175–193 (WRTPEDRSDPDACTISKDH) the chain is Extracellular. The chain crosses the membrane as a helical span at residues 194-216 (GYTIYSTFGAFYIPLLLMLVLYG). Residues 217-346 (RIFRAARFRI…LARERKTVKT (130 aa)) are Cytoplasmic-facing. Positions 235 to 261 (KKGAGTSLGTSSAPPPKKSLNGQPGSG) are disordered. Lysine 345, threonine 346, and glycine 352 together coordinate 1D-myo-inositol 4-phosphate. A helical transmembrane segment spans residues 347–370 (LGIIMGTFILCWLPFFIVALVLPF). Residues 371-378 (CESSCHMP) are Extracellular-facing. Residues 379–403 (ALLGAIINWLGYSNSLLNPVIYAYF) traverse the membrane as a helical segment. An NPxxY motif; important for ligand-induced conformation changes and signaling motif is present at residues 396–400 (NPVIY). The 1D-myo-inositol 4-phosphate site is built by phenylalanine 403, asparagine 404, and lysine 405. Topologically, residues 404–422 (NKDFQNAFKKIIKCKFCRR) are cytoplasmic.

It belongs to the G-protein coupled receptor 1 family. 5-hydroxytryptamine receptor subfamily. HTR1A sub-subfamily. Heterodimer; heterodimerizes with GPER1. Interacts with YIF1B. Interacts with GPR39 and GALR1. Detected in hypothalamus, mesencephalon, amygdala, medulla, thalamus, septum and hippocampus.

Its subcellular location is the cell membrane. It is found in the cell projection. The protein localises to the dendrite. Its activity is regulated as follows. G-protein coupled receptor activity is regulated by lipids: phosphatidylinositol 4-phosphate increases HTR1A-mediated activity. G-protein coupled receptor for 5-hydroxytryptamine (serotonin). Also functions as a receptor for various drugs and psychoactive substances. Ligand binding causes a conformation change that triggers signaling via guanine nucleotide-binding proteins (G proteins) and modulates the activity of downstream effectors, such as adenylate cyclase. HTR1A is coupled to G(i)/G(o) G alpha proteins and mediates inhibitory neurotransmission: signaling inhibits adenylate cyclase activity and activates a phosphatidylinositol-calcium second messenger system that regulates the release of Ca(2+) ions from intracellular stores. Beta-arrestin family members regulate signaling by mediating both receptor desensitization and resensitization processes. The chain is 5-hydroxytryptamine receptor 1A from Rattus norvegicus (Rat).